Here is a 149-residue protein sequence, read N- to C-terminus: Large ribosomal subunit protein uL22c (149 aa).

Belongs to the universal ribosomal protein uL22 family. In terms of assembly, part of the 50S ribosomal subunit.

Its subcellular location is the plastid. The protein resides in the chloroplast. Functionally, this protein binds specifically to 23S rRNA. In terms of biological role, the globular domain of the protein is located near the polypeptide exit tunnel on the outside of the subunit, while an extended beta-hairpin is found that lines the wall of the exit tunnel in the center of the 70S ribosome. The polypeptide is Large ribosomal subunit protein uL22c (rpl22) (Hordeum vulgare (Barley)).